The primary structure comprises 561 residues: SH3 domain-binding protein 2 (561 aa).

Positions 26-130 (GVAKAGYLHK…WMALLRREIG (105 aa)) constitute a PH domain. 2 disordered regions span residues 160 to 316 (VDIS…GACS) and 333 to 451 (KLKS…YEKV). Acidic residues predominate over residues 170 to 188 (DNEDYEHDDEDDSYLEPDS). Phosphotyrosine; by SYK is present on residues Tyr-174 and Tyr-183. Positions 201–210 (PPAYPPPPVP) match the SH3-binding motif. Pro residues-rich tracts occupy residues 202-213 (PAYPPPPVPTPR) and 233-242 (PLLPPPPPKH). Residues 252 to 266 (EDSKRDPLCPRRAEP) show a composition bias toward basic and acidic residues. Ser-278 carries the phosphoserine modification. A compositionally biased stretch (pro residues) spans 342–354 (RGPPTSEPPPVPA). Residues Ser-416 and Ser-427 each carry the phosphoserine modification. Residue Tyr-448 is modified to Phosphotyrosine; by SYK. One can recognise an SH2 domain in the interval 457–555 (VFVNTTESCE…HQSLLLRHPY (99 aa)).

In terms of processing, phosphorylated. Phosphorylation at Tyr-448 may stimulate the activity of the LYN kinase. As to expression, expressed in a variety of tissues including lung, liver, skeletal muscle, kidney and pancreas.

Binds differentially to the SH3 domains of certain proteins of signal transduction pathways. Binds to phosphatidylinositols; linking the hemopoietic tyrosine kinase fes to the cytoplasmic membrane in a phosphorylation dependent mechanism. This is SH3 domain-binding protein 2 (SH3BP2) from Homo sapiens (Human).